The chain runs to 132 residues: Small ribosomal subunit protein uS8 (132 aa).

This sequence belongs to the universal ribosomal protein uS8 family. Part of the 30S ribosomal subunit. Contacts proteins S5 and S12.

In terms of biological role, one of the primary rRNA binding proteins, it binds directly to 16S rRNA central domain where it helps coordinate assembly of the platform of the 30S subunit. The polypeptide is Small ribosomal subunit protein uS8 (Clostridium beijerinckii (strain ATCC 51743 / NCIMB 8052) (Clostridium acetobutylicum)).